The chain runs to 640 residues: Threonine--tRNA ligase (640 aa).

Residues 224 to 525 (DHRKLGKELD…LTEHYAGAFP (302 aa)) form a catalytic region. Positions 323, 374, and 502 each coordinate Zn(2+).

Belongs to the class-II aminoacyl-tRNA synthetase family. Homodimer. Zn(2+) is required as a cofactor.

It is found in the cytoplasm. It catalyses the reaction tRNA(Thr) + L-threonine + ATP = L-threonyl-tRNA(Thr) + AMP + diphosphate + H(+). Functionally, catalyzes the attachment of threonine to tRNA(Thr) in a two-step reaction: L-threonine is first activated by ATP to form Thr-AMP and then transferred to the acceptor end of tRNA(Thr). Also edits incorrectly charged L-seryl-tRNA(Thr). This is Threonine--tRNA ligase from Tropheryma whipplei (strain TW08/27) (Whipple's bacillus).